The chain runs to 954 residues: Glycine dehydrogenase (decarboxylating) (954 aa).

The residue at position 706 (lysine 706) is an N6-(pyridoxal phosphate)lysine.

It belongs to the GcvP family. In terms of assembly, the glycine cleavage system is composed of four proteins: P, T, L and H. Pyridoxal 5'-phosphate is required as a cofactor.

It carries out the reaction N(6)-[(R)-lipoyl]-L-lysyl-[glycine-cleavage complex H protein] + glycine + H(+) = N(6)-[(R)-S(8)-aminomethyldihydrolipoyl]-L-lysyl-[glycine-cleavage complex H protein] + CO2. The glycine cleavage system catalyzes the degradation of glycine. The P protein binds the alpha-amino group of glycine through its pyridoxal phosphate cofactor; CO(2) is released and the remaining methylamine moiety is then transferred to the lipoamide cofactor of the H protein. This chain is Glycine dehydrogenase (decarboxylating), found in Pseudomonas savastanoi pv. phaseolicola (strain 1448A / Race 6) (Pseudomonas syringae pv. phaseolicola (strain 1448A / Race 6)).